Reading from the N-terminus, the 325-residue chain is UDP-N-acetylenolpyruvoylglucosamine reductase (325 aa).

The 182-residue stretch at 40–221 (RTGGLAELFY…RAAMDEVALH (182 aa)) folds into the FAD-binding PCMH-type domain. R186 is an active-site residue. The active-site Proton donor is the S235. E305 is a catalytic residue.

This sequence belongs to the MurB family. The cofactor is FAD.

The protein resides in the cytoplasm. It catalyses the reaction UDP-N-acetyl-alpha-D-muramate + NADP(+) = UDP-N-acetyl-3-O-(1-carboxyvinyl)-alpha-D-glucosamine + NADPH + H(+). It functions in the pathway cell wall biogenesis; peptidoglycan biosynthesis. Functionally, cell wall formation. The chain is UDP-N-acetylenolpyruvoylglucosamine reductase from Bartonella henselae (strain ATCC 49882 / DSM 28221 / CCUG 30454 / Houston 1) (Rochalimaea henselae).